The chain runs to 291 residues: uncharacterized protein (291 aa).

Residues 68 to 205 (PVAVSASFLW…VIQLWARPRG (138 aa)) enclose the DAGKc domain.

This is an uncharacterized protein from Mycobacterium tuberculosis (strain CDC 1551 / Oshkosh).